Reading from the N-terminus, the 579-residue chain is uncharacterized protein (579 aa).

A GGDEF domain is found at 449-577 (QKGVFILVDI…GKNRLMIHDS (129 aa)).

This is an uncharacterized protein from Bacillus subtilis (strain 168).